Consider the following 164-residue polypeptide: ATP synthase subunit b (164 aa).

Residues 6–26 (GELVGNFILVTGSVIVLLLLI) form a helical membrane-spanning segment.

Belongs to the ATPase B chain family. F-type ATPases have 2 components, F(1) - the catalytic core - and F(0) - the membrane proton channel. F(1) has five subunits: alpha(3), beta(3), gamma(1), delta(1), epsilon(1). F(0) has three main subunits: a(1), b(2) and c(10-14). The alpha and beta chains form an alternating ring which encloses part of the gamma chain. F(1) is attached to F(0) by a central stalk formed by the gamma and epsilon chains, while a peripheral stalk is formed by the delta and b chains.

The protein resides in the cell membrane. In terms of biological role, f(1)F(0) ATP synthase produces ATP from ADP in the presence of a proton or sodium gradient. F-type ATPases consist of two structural domains, F(1) containing the extramembraneous catalytic core and F(0) containing the membrane proton channel, linked together by a central stalk and a peripheral stalk. During catalysis, ATP synthesis in the catalytic domain of F(1) is coupled via a rotary mechanism of the central stalk subunits to proton translocation. Functionally, component of the F(0) channel, it forms part of the peripheral stalk, linking F(1) to F(0). In Streptococcus pyogenes serotype M12 (strain MGAS2096), this protein is ATP synthase subunit b.